The chain runs to 240 residues: MGRAFQNRKESMAKTADAKTKVYSKYGREIYVCAKSGGVDPAGNLALRGLIDRAKKDQVPSHVIDKALDKASGVGGEDYELARYEGFGPGSCMVIVECLTDNPNRTFGDVRACFNKAKSKLGTPGSVSHMFDHCAILAFAGSDEEAVLEALMEADVDVTDIENEAGRITVFAPHTEYAKTKQALADAFGELDFEVDEIQFLAQTMTPVAGDDVAMFDKLLVTLNDLDDVQNIYHNAELQG.

It belongs to the TACO1 family.

It localises to the cytoplasm. In Chromohalobacter salexigens (strain ATCC BAA-138 / DSM 3043 / CIP 106854 / NCIMB 13768 / 1H11), this protein is Probable transcriptional regulatory protein Csal_0810.